Here is a 78-residue protein sequence, read N- to C-terminus: Acyl carrier protein (78 aa).

In terms of domain architecture, Carrier spans 2–77; it reads SDVLERVSKI…DAVKFISEKV (76 aa). S37 is modified (O-(pantetheine 4'-phosphoryl)serine).

It belongs to the acyl carrier protein (ACP) family. In terms of processing, 4'-phosphopantetheine is transferred from CoA to a specific serine of apo-ACP by AcpS. This modification is essential for activity because fatty acids are bound in thioester linkage to the sulfhydryl of the prosthetic group.

Its subcellular location is the cytoplasm. It participates in lipid metabolism; fatty acid biosynthesis. Its function is as follows. Carrier of the growing fatty acid chain in fatty acid biosynthesis. This is Acyl carrier protein from Maricaulis maris (strain MCS10) (Caulobacter maris).